We begin with the raw amino-acid sequence, 125 residues long: MPTKNQLIRHGREEKRRTDRTRALDQCPQKQGVCPRVSTRTPKKPNSAPRKIAKVRLSNRHDIFAHIPGEGHNSQEHSMVLIRGGRVKDSPGVKFHCIRGVKDLLGIPDRRRGRSKYGAEKPKSI.

A disordered region spans residues Met-1–Lys-51. A compositionally biased stretch (basic and acidic residues) spans His-10–Ala-23.

It belongs to the universal ribosomal protein uS12 family.

It localises to the mitochondrion. Functionally, protein S12 is involved in the translation initiation step. The chain is Small ribosomal subunit protein uS12m (RPS12) from Nicotiana sylvestris (Wood tobacco).